The sequence spans 257 residues: tRNA pseudouridine synthase A (257 aa).

The active-site Nucleophile is aspartate 53. Tyrosine 111 lines the substrate pocket.

This sequence belongs to the tRNA pseudouridine synthase TruA family. In terms of assembly, homodimer.

It catalyses the reaction uridine(38/39/40) in tRNA = pseudouridine(38/39/40) in tRNA. Its function is as follows. Formation of pseudouridine at positions 38, 39 and 40 in the anticodon stem and loop of transfer RNAs. The sequence is that of tRNA pseudouridine synthase A from Xylella fastidiosa (strain M23).